Here is a 199-residue protein sequence, read N- to C-terminus: Tegument protein UL14 homolog (199 aa).

Residues 176 to 191 (TDMNQMQPQPISKNEN) show a composition bias toward polar residues. The tract at residues 176-199 (TDMNQMQPQPISKNENPPTPHTDV) is disordered.

It belongs to the alphaherpesvirinae HHV-1 UL14 protein family.

The protein localises to the virion tegument. Its subcellular location is the host cytoplasm. It localises to the host nucleus. In terms of biological role, contributes to the nuclear transport of the viral transcriptional activator VP16 homolog during the early phase of infection. Therefore, participates indirectly in the regulation of the immediate-early gene expression. Additionally, seems to be important for efficient nuclear targeting of capsids. The polypeptide is Tegument protein UL14 homolog (Varicella-zoster virus (strain Dumas) (HHV-3)).